Consider the following 292-residue polypeptide: uncharacterized protein (292 aa).

This sequence belongs to the glycosyltransferase 2 family. WaaE/KdtX subfamily.

This is an uncharacterized protein from Rickettsia prowazekii (strain Madrid E).